A 702-amino-acid chain; its full sequence is Ribosomal RNA large subunit methyltransferase K/L (702 aa).

The THUMP domain occupies 43–154 (LIYQSLMWSR…KETASIALDL (112 aa)).

This sequence belongs to the methyltransferase superfamily. RlmKL family.

Its subcellular location is the cytoplasm. The catalysed reaction is guanosine(2445) in 23S rRNA + S-adenosyl-L-methionine = N(2)-methylguanosine(2445) in 23S rRNA + S-adenosyl-L-homocysteine + H(+). The enzyme catalyses guanosine(2069) in 23S rRNA + S-adenosyl-L-methionine = N(2)-methylguanosine(2069) in 23S rRNA + S-adenosyl-L-homocysteine + H(+). Its function is as follows. Specifically methylates the guanine in position 2445 (m2G2445) and the guanine in position 2069 (m7G2069) of 23S rRNA. The protein is Ribosomal RNA large subunit methyltransferase K/L of Salmonella agona (strain SL483).